Consider the following 434-residue polypeptide: MEGTAGTITSNEWSSPTSPEGSTASGGSQALDKPIDNDAEGVWSPDIEQSFQEALAIYPPCGRRKIILSDEGKMYGRNELIARYIKLRTGKTRTRKQVSSHIQVLARRKAREIQAKLKDQAAKDKALQSMAAMSSAQIISATAFHSSMALARGPGRPAVSGFWQGALPGQAGTSHDVKPFSQQTYAVQPPLPLPGFESPAGPAPSPSAPPAPPWQGRSVASSKLWMLEFSAFLEQQQDPDTYNKHLFVHIGQSSPSYSDPYLEAVDIRQIYDKFPEKKGGLKDLFERGPSNAFFLVKFWADLNTNIEDEGSSFYGVSSQYESPENMIITCSTKVCSFGKQVVEKVETEYARYENGHYSYRIHRSPLCEYMINFIHKLKHLPEKYMMNSVLENFTILQVVTNRDTQETLLCIAYVFEVSASEHGAQHHIYRLVKE.

Residues 1–28 (MEGTAGTITSNEWSSPTSPEGSTASGGS) show a composition bias toward polar residues. 2 disordered regions span residues 1–42 (MEGT…AEGV) and 188–215 (QPPL…PPWQ). Residues 36–112 (DNDAEGVWSP…QVLARRKARE (77 aa)) constitute a DNA-binding region (TEA). Residues 201–213 (GPAPSPSAPPAPP) are compositionally biased toward pro residues.

Interacts with YAP1 and WWTR1/TAZ. Preferentially expressed in skeletal muscle. Lower levels in pancreas, placenta, and heart.

Its subcellular location is the nucleus. Functionally, transcription factor which plays a key role in the Hippo signaling pathway, a pathway involved in organ size control and tumor suppression by restricting proliferation and promoting apoptosis. The core of this pathway is composed of a kinase cascade wherein MST1/MST2, in complex with its regulatory protein SAV1, phosphorylates and activates LATS1/2 in complex with its regulatory protein MOB1, which in turn phosphorylates and inactivates YAP1 oncoprotein and WWTR1/TAZ. Acts by mediating gene expression of YAP1 and WWTR1/TAZ, thereby regulating cell proliferation, migration and epithelial mesenchymal transition (EMT) induction. Binds specifically and non-cooperatively to the Sph and GT-IIC 'enhansons' (5'-GTGGAATGT-3') and activates transcription. Binds to the M-CAT motif. The chain is Transcriptional enhancer factor TEF-3 (TEAD4) from Homo sapiens (Human).